Consider the following 544-residue polypeptide: Chaperonin GroEL (544 aa).

Residues 29 to 32 (TLGP), 86 to 90 (DGTTT), Gly413, 476 to 478 (NAA), and Asp492 each bind ATP. A disordered region spans residues 522 to 544 (PDPNANNNAAAGANPAAGMGGMM). The segment covering 524-538 (PNANNNAAAGANPAA) has biased composition (low complexity).

Belongs to the chaperonin (HSP60) family. As to quaternary structure, forms a cylinder of 14 subunits composed of two heptameric rings stacked back-to-back. Interacts with the co-chaperonin GroES.

It localises to the cytoplasm. The enzyme catalyses ATP + H2O + a folded polypeptide = ADP + phosphate + an unfolded polypeptide.. Functionally, together with its co-chaperonin GroES, plays an essential role in assisting protein folding. The GroEL-GroES system forms a nano-cage that allows encapsulation of the non-native substrate proteins and provides a physical environment optimized to promote and accelerate protein folding. In Lacticaseibacillus casei (strain BL23) (Lactobacillus casei), this protein is Chaperonin GroEL.